An 83-amino-acid chain; its full sequence is NAD(P)H-quinone oxidoreductase subunit L, organellar chromatophore (83 aa).

Helical transmembrane passes span 17–37 and 53–73; these read LLLA…LALY and LFVY…SPFL.

It belongs to the complex I NdhL subunit family. NDH-1 can be composed of about 15 different subunits; different subcomplexes with different compositions have been identified which probably have different functions.

It localises to the plastid. The protein localises to the organellar chromatophore thylakoid membrane. It catalyses the reaction a plastoquinone + NADH + (n+1) H(+)(in) = a plastoquinol + NAD(+) + n H(+)(out). It carries out the reaction a plastoquinone + NADPH + (n+1) H(+)(in) = a plastoquinol + NADP(+) + n H(+)(out). Its function is as follows. NDH-1 shuttles electrons from an unknown electron donor, via FMN and iron-sulfur (Fe-S) centers, to quinones in the respiratory and/or the photosynthetic chain. The immediate electron acceptor for the enzyme in this species is believed to be plastoquinone. Couples the redox reaction to proton translocation, and thus conserves the redox energy in a proton gradient. The sequence is that of NAD(P)H-quinone oxidoreductase subunit L, organellar chromatophore from Paulinella chromatophora.